The following is a 593-amino-acid chain: Aspartate--tRNA ligase (593 aa).

L-aspartate is bound at residue Glu173. The tract at residues 197-200 (QLFK) is aspartate. Arg219 provides a ligand contact to L-aspartate. ATP contacts are provided by residues 219 to 221 (RDE) and Gln228. Residue His448 participates in L-aspartate binding. Residue Glu482 coordinates ATP. Arg489 contributes to the L-aspartate binding site. 534-537 (GLDR) is an ATP binding site.

The protein belongs to the class-II aminoacyl-tRNA synthetase family. Type 1 subfamily. As to quaternary structure, homodimer.

It localises to the cytoplasm. The enzyme catalyses tRNA(Asp) + L-aspartate + ATP = L-aspartyl-tRNA(Asp) + AMP + diphosphate. Its function is as follows. Catalyzes the attachment of L-aspartate to tRNA(Asp) in a two-step reaction: L-aspartate is first activated by ATP to form Asp-AMP and then transferred to the acceptor end of tRNA(Asp). The polypeptide is Aspartate--tRNA ligase (Shewanella denitrificans (strain OS217 / ATCC BAA-1090 / DSM 15013)).